A 409-amino-acid polypeptide reads, in one-letter code: Multifunctional CCA protein (409 aa).

The ATP site is built by Gly8 and Arg11. CTP-binding residues include Gly8 and Arg11. Mg(2+) contacts are provided by Asp21 and Asp23. 3 residues coordinate ATP: Arg91, Arg137, and Arg140. Arg91, Arg137, and Arg140 together coordinate CTP. In terms of domain architecture, HD spans 228–329 (TGAHTLSVLL…LELLQSFDVF (102 aa)).

This sequence belongs to the tRNA nucleotidyltransferase/poly(A) polymerase family. Bacterial CCA-adding enzyme type 1 subfamily. In terms of assembly, monomer. Can also form homodimers and oligomers. It depends on Mg(2+) as a cofactor. Requires Ni(2+) as cofactor.

The enzyme catalyses a tRNA precursor + 2 CTP + ATP = a tRNA with a 3' CCA end + 3 diphosphate. The catalysed reaction is a tRNA with a 3' CCA end + 2 CTP + ATP = a tRNA with a 3' CCACCA end + 3 diphosphate. Catalyzes the addition and repair of the essential 3'-terminal CCA sequence in tRNAs without using a nucleic acid template. Adds these three nucleotides in the order of C, C, and A to the tRNA nucleotide-73, using CTP and ATP as substrates and producing inorganic pyrophosphate. tRNA 3'-terminal CCA addition is required both for tRNA processing and repair. Also involved in tRNA surveillance by mediating tandem CCA addition to generate a CCACCA at the 3' terminus of unstable tRNAs. While stable tRNAs receive only 3'-terminal CCA, unstable tRNAs are marked with CCACCA and rapidly degraded. This chain is Multifunctional CCA protein, found in Pseudomonas fluorescens (strain ATCC BAA-477 / NRRL B-23932 / Pf-5).